The chain runs to 25 residues: Kunitz-type serine protease inhibitor 2 (25 aa).

One can recognise a BPTI/Kunitz inhibitor domain in the interval 6–25; that stretch reads VCELPKEVGGPCRGHIIPRY.

The protein localises to the secreted. Functionally, inhibits bovine trypsin, human plasma kallikrein and human neutrophil elastase. The chain is Kunitz-type serine protease inhibitor 2 from Rhipicephalus microplus (Cattle tick).